The following is a 250-amino-acid chain: DNA repair protein RecO (250 aa).

Belongs to the RecO family.

In terms of biological role, involved in DNA repair and RecF pathway recombination. The polypeptide is DNA repair protein RecO (Granulibacter bethesdensis (strain ATCC BAA-1260 / CGDNIH1)).